A 370-amino-acid chain; its full sequence is Aminomethyltransferase (370 aa).

This sequence belongs to the GcvT family. As to quaternary structure, the glycine cleavage system is composed of four proteins: P, T, L and H.

The enzyme catalyses N(6)-[(R)-S(8)-aminomethyldihydrolipoyl]-L-lysyl-[protein] + (6S)-5,6,7,8-tetrahydrofolate = N(6)-[(R)-dihydrolipoyl]-L-lysyl-[protein] + (6R)-5,10-methylene-5,6,7,8-tetrahydrofolate + NH4(+). In terms of biological role, the glycine cleavage system catalyzes the degradation of glycine. The protein is Aminomethyltransferase of Prochlorococcus marinus (strain MIT 9515).